Reading from the N-terminus, the 229-residue chain is MAKLIVALDYTYASEALAMANILKKHVEWVKVGLELFTHEGPSIIQLLKRMGFKVMLDLKLFDIPNTVKGSVRSACLMDVDMLTLHILGGEHMIKAALNEVQSSIQKKSHSPLLFGVTILTSIKQGELPGYNQDIASMVLNLAAYGQQWGLHGIVCSGQELTKIKALYPSLSCLTPGIRMSYSQKDDQHRVMTPSEAVKAGSDFLVIGRPITQAEQPIKIVEDIISSIM.

Substrate-binding positions include Asp9, Lys31, 58–67 (DLKLFDIPNT), Thr121, Arg179, Gln188, Gly208, and Arg209. The Proton donor role is filled by Lys60.

It belongs to the OMP decarboxylase family. Type 1 subfamily. In terms of assembly, homodimer.

It carries out the reaction orotidine 5'-phosphate + H(+) = UMP + CO2. The protein operates within pyrimidine metabolism; UMP biosynthesis via de novo pathway; UMP from orotate: step 2/2. In terms of biological role, catalyzes the decarboxylation of orotidine 5'-monophosphate (OMP) to uridine 5'-monophosphate (UMP). This Lawsonia intracellularis (strain PHE/MN1-00) protein is Orotidine 5'-phosphate decarboxylase.